A 699-amino-acid polypeptide reads, in one-letter code: MGHHRPWLHASVLWAGVASLLLPPAMTQQLRGDGLGFRNRNNSTGVAGLSEEASAELRHHLHSPRDHPDENKDVSTENGHHFWSHPDREKEDEDVSKEYGHLLPGHRSQDHKVGDEGVSGEEVFAEHGGQARGHRGHGSEDTEDSAEHRHHLPSHRSHSHQDEDEDEVVSSEHHHHILRHGHRGHDGEDDEGEEEEEEEEEEEEASTEYGHQAHRHRGHGSEEDEDVSDGHHHHGPSHRHQGHEEDDDDDDDDDDDDDDDDVSIEYRHQAHRHQGHGIEEDEDVSDGHHHRDPSHRHRSHEEDDNDDDDVSTEYGHQAHRHQDHRKEEVEAVSGEHHHHVPDHRHQGHRDEEEDEDVSTERWHQGPQHVHHGLVDEEEEEEEITVQFGHYVASHQPRGHKSDEEDFQDEYKTEVPHHHHHRVPREEDEEVSAELGHQAPSHRQSHQDEETGHGQRGSIKEMSHHPPGHTVVKDRSHLRKDDSEEEKEKEEDPGSHEEDDESSEQGEKGTHHGSRDQEDEEDEEEGHGLSLNQEEEEEEDKEEEEEEEDEERREERAEVGAPLSPDHSEEEEEEEEGLEEDEPRFTIIPNPLDRREEAGGASSEEESGEDTGPQDAQEYGNYQPGSLCGYCSFCNRCTECESCHCDEENMGEHCDQCQHCQFCYLCPLVCETVCAPGSYVDYFSSSLYQALADMLETPEP.

An N-terminal signal peptide occupies residues 1–28 (MGHHRPWLHASVLWAGVASLLLPPAMTQ). The segment at 50–95 (SEEASAELRHHLHSPRDHPDENKDVSTENGHHFWSHPDREKEDEDV) is disordered. Residues 55-89 (AELRHHLHSPRDHPDENKDVSTENGHHFWSHPDRE) show a composition bias toward basic and acidic residues. Position 76 is a phosphothreonine; by FAM20C (T76). Repeat copies occupy residues 106–121 (HRSQ…VSGE), 134–154 (HRGH…HLPS), 155–177 (HRSH…HHHI), 180–213 (HGHR…GHQA), 214–237 (HRHR…HGPS), 238–270 (HRHQ…RHQA), 271–294 (HRHQ…RDPS), 295–318 (HRHR…GHQA), 319–342 (HRHQ…HVPD), and 343–365 (HRHQ…WHQG). Residues 106 to 342 (HRSQDHKVGD…SGEHHHHVPD (237 aa)) are 6 X approximate tandem repeats. Residues 106–365 (HRSQDHKVGD…DVSTERWHQG (260 aa)) are 4 X tandem repeats, acidic. 2 positions are modified to phosphoserine; by FAM20C: S119 and S145. Residues 127–617 (HGGQARGHRG…EDTGPQDAQE (491 aa)) are disordered. 2 stretches are compositionally biased toward basic residues: residues 148-158 (HRHHLPSHRSH) and 173-183 (HHHHILRHGHR). Positions 187–206 (GEDDEGEEEEEEEEEEEEAS) are enriched in acidic residues. Residues 231-241 (HHHHGPSHRHQ) show a composition bias toward basic residues. Acidic residues predominate over residues 244 to 263 (EEDDDDDDDDDDDDDDDDVS). Over residues 288–298 (HHHRDPSHRHR) the composition is skewed to basic residues. Over residues 302 to 311 (EDDNDDDDVS) the composition is skewed to acidic residues. Basic and acidic residues predominate over residues 324–335 (HRKEEVEAVSGE). At S333 the chain carries Phosphoserine. Residues 336–347 (HHHHVPDHRHQG) are compositionally biased toward basic residues. S358 and S431 each carry phosphoserine; by FAM20C. Basic and acidic residues-rich tracts occupy residues 444–463 (SHQD…EMSH) and 470–481 (VVKDRSHLRKDD). S494 bears the Phosphoserine; by FAM20C mark. Over residues 504 to 515 (QGEKGTHHGSRD) the composition is skewed to basic and acidic residues. 2 stretches are compositionally biased toward acidic residues: residues 532–551 (QEEE…DEER) and 567–581 (SEEE…EEDE). Residue S567 is modified to Phosphoserine; by FAM20C. The tract at residues 627 to 673 (CGYCSFCNRCTECESCHCDEENMGEHCDQCQHCQFCYLCPLVCETVC) is metal-binding.

This sequence belongs to the HRC family.

The protein localises to the sarcoplasmic reticulum lumen. Functionally, may play a role in the regulation of calcium sequestration or release in the SR of skeletal and cardiac muscle. The chain is Sarcoplasmic reticulum histidine-rich calcium-binding protein (HRC) from Homo sapiens (Human).